The following is a 103-amino-acid chain: UPF0145 protein CYB_1351 (103 aa).

The protein belongs to the UPF0145 family.

The chain is UPF0145 protein CYB_1351 from Synechococcus sp. (strain JA-2-3B'a(2-13)) (Cyanobacteria bacterium Yellowstone B-Prime).